Consider the following 381-residue polypeptide: DNA double-strand break repair protein Mre11 (381 aa).

D9, H11, D50, and D85 together coordinate Mn(2+). H86 functions as the Proton donor in the catalytic mechanism. H156, H187, and H189 together coordinate Mn(2+).

The protein belongs to the MRE11/RAD32 family. As to quaternary structure, homodimer. Forms a heterotetramer composed of two Mre11 subunits and two Rad50 subunits. Requires Mn(2+) as cofactor.

With respect to regulation, nuclease activity is regulated by Rad50. Functionally, part of the Rad50/Mre11 complex, which is involved in the early steps of DNA double-strand break (DSB) repair. The complex may facilitate opening of the processed DNA ends to aid in the recruitment of HerA and NurA. Mre11 binds to DSB ends and has both double-stranded 3'-5' exonuclease activity and single-stranded endonuclease activity. This is DNA double-strand break repair protein Mre11 from Saccharolobus solfataricus (strain ATCC 35092 / DSM 1617 / JCM 11322 / P2) (Sulfolobus solfataricus).